Reading from the N-terminus, the 441-residue chain is GTPase Der (441 aa).

2 EngA-type G domains span residues 4-168 (PVVA…PEDI) and 177-352 (IRIA…EQNS). GTP contacts are provided by residues 10 to 17 (GRPNVGKS), 57 to 61 (DTGGI), 121 to 124 (NKVE), 183 to 190 (GRPNVGKS), 230 to 234 (DTAGM), and 295 to 298 (NKWD). Positions 353 to 437 (TRVATATLNT…PIRMIVRQKD (85 aa)) constitute a KH-like domain.

This sequence belongs to the TRAFAC class TrmE-Era-EngA-EngB-Septin-like GTPase superfamily. EngA (Der) GTPase family. Associates with the 50S ribosomal subunit.

GTPase that plays an essential role in the late steps of ribosome biogenesis. In Desulfitobacterium hafniense (strain DSM 10664 / DCB-2), this protein is GTPase Der.